The sequence spans 297 residues: 4-hydroxy-tetrahydrodipicolinate synthase (297 aa).

Thr-46 is a pyruvate binding site. Tyr-134 acts as the Proton donor/acceptor in catalysis. Catalysis depends on Lys-162, which acts as the Schiff-base intermediate with substrate. Ile-204 is a binding site for pyruvate.

This sequence belongs to the DapA family. As to quaternary structure, homotetramer; dimer of dimers.

It is found in the cytoplasm. It catalyses the reaction L-aspartate 4-semialdehyde + pyruvate = (2S,4S)-4-hydroxy-2,3,4,5-tetrahydrodipicolinate + H2O + H(+). It functions in the pathway amino-acid biosynthesis; L-lysine biosynthesis via DAP pathway; (S)-tetrahydrodipicolinate from L-aspartate: step 3/4. Functionally, catalyzes the condensation of (S)-aspartate-beta-semialdehyde [(S)-ASA] and pyruvate to 4-hydroxy-tetrahydrodipicolinate (HTPA). In Stenotrophomonas maltophilia (strain R551-3), this protein is 4-hydroxy-tetrahydrodipicolinate synthase.